Reading from the N-terminus, the 85-residue chain is Small ribosomal subunit protein uS17 (85 aa).

It belongs to the universal ribosomal protein uS17 family. Part of the 30S ribosomal subunit.

In terms of biological role, one of the primary rRNA binding proteins, it binds specifically to the 5'-end of 16S ribosomal RNA. This is Small ribosomal subunit protein uS17 from Natranaerobius thermophilus (strain ATCC BAA-1301 / DSM 18059 / JW/NM-WN-LF).